The primary structure comprises 85 residues: Large ribosomal subunit protein bL27 (85 aa).

The segment at 1-21 is disordered; that stretch reads MAHKKAGGSTRNGRDSNAQRL. Over residues 9-19 the composition is skewed to polar residues; that stretch reads STRNGRDSNAQ.

It belongs to the bacterial ribosomal protein bL27 family.

This chain is Large ribosomal subunit protein bL27, found in Pectobacterium atrosepticum (strain SCRI 1043 / ATCC BAA-672) (Erwinia carotovora subsp. atroseptica).